The primary structure comprises 365 residues: tRNA-specific 2-thiouridylase MnmA (365 aa).

Residues 6–13 (GMSGGVDS) and M32 contribute to the ATP site. The interaction with target base in tRNA stretch occupies residues 92-94 (NPD). C97 serves as the catalytic Nucleophile. A disulfide bridge connects residues C97 and C197. Residue G121 coordinates ATP. Residues 147-149 (KDQ) are interaction with tRNA. Residue C197 is the Cysteine persulfide intermediate of the active site. The tract at residues 315–316 (RY) is interaction with tRNA.

Belongs to the MnmA/TRMU family.

It is found in the cytoplasm. It catalyses the reaction S-sulfanyl-L-cysteinyl-[protein] + uridine(34) in tRNA + AH2 + ATP = 2-thiouridine(34) in tRNA + L-cysteinyl-[protein] + A + AMP + diphosphate + H(+). In terms of biological role, catalyzes the 2-thiolation of uridine at the wobble position (U34) of tRNA, leading to the formation of s(2)U34. The chain is tRNA-specific 2-thiouridylase MnmA from Azoarcus sp. (strain BH72).